The following is a 223-amino-acid chain: 2-C-methyl-D-erythritol 4-phosphate cytidylyltransferase (223 aa).

This sequence belongs to the IspD/TarI cytidylyltransferase family. IspD subfamily.

It catalyses the reaction 2-C-methyl-D-erythritol 4-phosphate + CTP + H(+) = 4-CDP-2-C-methyl-D-erythritol + diphosphate. The protein operates within isoprenoid biosynthesis; isopentenyl diphosphate biosynthesis via DXP pathway; isopentenyl diphosphate from 1-deoxy-D-xylulose 5-phosphate: step 2/6. Catalyzes the formation of 4-diphosphocytidyl-2-C-methyl-D-erythritol from CTP and 2-C-methyl-D-erythritol 4-phosphate (MEP). This is 2-C-methyl-D-erythritol 4-phosphate cytidylyltransferase from Prochlorococcus marinus (strain MIT 9301).